We begin with the raw amino-acid sequence, 166 residues long: Transcriptional repressor NrdR (166 aa).

A zinc finger lies at cysteine 3–cysteine 34. The region spanning leucine 49–aspartate 139 is the ATP-cone domain.

This sequence belongs to the NrdR family. The cofactor is Zn(2+).

Functionally, negatively regulates transcription of bacterial ribonucleotide reductase nrd genes and operons by binding to NrdR-boxes. This chain is Transcriptional repressor NrdR, found in Methylacidiphilum infernorum (isolate V4) (Methylokorus infernorum (strain V4)).